A 436-amino-acid polypeptide reads, in one-letter code: Citrate synthase (436 aa).

Residues His-313 and Asp-371 contribute to the active site.

It belongs to the citrate synthase family. Homohexamer.

The catalysed reaction is oxaloacetate + acetyl-CoA + H2O = citrate + CoA + H(+). It functions in the pathway carbohydrate metabolism; tricarboxylic acid cycle; isocitrate from oxaloacetate: step 1/2. This is Citrate synthase (aarA) from Acetobacter aceti.